Consider the following 159-residue polypeptide: Large ribosomal subunit protein uL15 (159 aa).

Positions 1–39 (MKLNELSPADGSTKKRMRVGRGVGSGKGKTAGRGVKGQN) are disordered. Over residues 21–35 (RGVGSGKGKTAGRGV) the composition is skewed to gly residues.

The protein belongs to the universal ribosomal protein uL15 family. Part of the 50S ribosomal subunit.

Its function is as follows. Binds to the 23S rRNA. This Hyphomonas neptunium (strain ATCC 15444) protein is Large ribosomal subunit protein uL15.